Consider the following 102-residue polypeptide: PqqA binding protein (102 aa).

The protein belongs to the PqqD family. As to quaternary structure, monomer. Interacts with PqqE.

It functions in the pathway cofactor biosynthesis; pyrroloquinoline quinone biosynthesis. Its function is as follows. Functions as a PqqA binding protein and presents PqqA to PqqE, in the pyrroloquinoline quinone (PQQ) biosynthetic pathway. This Rhodopseudomonas palustris (strain HaA2) protein is PqqA binding protein.